Reading from the N-terminus, the 336-residue chain is 4-hydroxy-3-methylbut-2-enyl diphosphate reductase (336 aa).

C37 lines the [4Fe-4S] cluster pocket. The (2E)-4-hydroxy-3-methylbut-2-enyl diphosphate site is built by H66 and H99. The dimethylallyl diphosphate site is built by H66 and H99. The isopentenyl diphosphate site is built by H66 and H99. Residue C121 participates in [4Fe-4S] cluster binding. H149 is a binding site for (2E)-4-hydroxy-3-methylbut-2-enyl diphosphate. H149 is a binding site for dimethylallyl diphosphate. H149 provides a ligand contact to isopentenyl diphosphate. The active-site Proton donor is the E151. T189 is a binding site for (2E)-4-hydroxy-3-methylbut-2-enyl diphosphate. C219 contacts [4Fe-4S] cluster. (2E)-4-hydroxy-3-methylbut-2-enyl diphosphate is bound by residues S247, S248, N249, and S292. Dimethylallyl diphosphate is bound by residues S247, S248, N249, and S292. Isopentenyl diphosphate contacts are provided by S247, S248, N249, and S292.

The protein belongs to the IspH family. [4Fe-4S] cluster serves as cofactor.

It catalyses the reaction isopentenyl diphosphate + 2 oxidized [2Fe-2S]-[ferredoxin] + H2O = (2E)-4-hydroxy-3-methylbut-2-enyl diphosphate + 2 reduced [2Fe-2S]-[ferredoxin] + 2 H(+). It carries out the reaction dimethylallyl diphosphate + 2 oxidized [2Fe-2S]-[ferredoxin] + H2O = (2E)-4-hydroxy-3-methylbut-2-enyl diphosphate + 2 reduced [2Fe-2S]-[ferredoxin] + 2 H(+). Its pathway is isoprenoid biosynthesis; dimethylallyl diphosphate biosynthesis; dimethylallyl diphosphate from (2E)-4-hydroxy-3-methylbutenyl diphosphate: step 1/1. It participates in isoprenoid biosynthesis; isopentenyl diphosphate biosynthesis via DXP pathway; isopentenyl diphosphate from 1-deoxy-D-xylulose 5-phosphate: step 6/6. Its function is as follows. Catalyzes the conversion of 1-hydroxy-2-methyl-2-(E)-butenyl 4-diphosphate (HMBPP) into a mixture of isopentenyl diphosphate (IPP) and dimethylallyl diphosphate (DMAPP). Acts in the terminal step of the DOXP/MEP pathway for isoprenoid precursor biosynthesis. The protein is 4-hydroxy-3-methylbut-2-enyl diphosphate reductase of Rhodococcus jostii (strain RHA1).